Reading from the N-terminus, the 507-residue chain is MEFLLGNPFSTPVGQCLEKATDGSLQSEDWTLNMEICDIINETEEGPKDAIRALKKRLNGNRNYREVMLALTVLETCVKNCGHRFHILVANRDFIDSVLVKIISPKNNPPTIVQDKVLALIQAWADAFRSSPDLTGVVHIYEELKRKGVEFPMADLDALSPIHTPQRSVPEVDPAATMPRSQSQQRTSAGSYSSPPPAPYSAPQAPALSVTGPITANSEQIARLRSELDVVRGNTKVMSEMLTEMVPGQEDSSDLELLQELNRTCRAMQQRIVELISRVSNEEVTEELLHVNDDLNNVFLRYERFERYRSGRSVQNASNGVLNEVTEDNLIDLGPGSPAVVSPMVGNTAPPSSLSSQLAGLDLGTESVSGTLSSLQQCNPRDGFDMFAQTRGNSLAEQRKTVTYEDPQAVGGLASALDNRKQSSEGIPVAQPSVMDDIEVWLRTDLKGDDLEEGVTSEEFDKFLEERAKAAEMVPDLPSPPMEAPAPASNPSGRKKPERSEDALFAL.

The VHS domain occupies 20–152; the sequence is ATDGSLQSED…ELKRKGVEFP (133 aa). S160 carries the phosphoserine modification. Positions 162 to 210 are disordered; the sequence is IHTPQRSVPEVDPAATMPRSQSQQRTSAGSYSSPPPAPYSAPQAPALSV. Position 164 is a phosphothreonine (T164). The GAT domain occupies 219-307; that stretch reads EQIARLRSEL…VFLRYERFER (89 aa). The Clathrin-binding signature appears at 329-334; that stretch reads NLIDLG. The disordered stretch occupies residues 467–507; the sequence is RAKAAEMVPDLPSPPMEAPAPASNPSGRKKPERSEDALFAL. A compositionally biased stretch (basic and acidic residues) spans 498 to 507; sequence ERSEDALFAL.

It belongs to the TOM1 family. Interacts with clathrin, SRC and TOLLIP. Interacts with MYO6. As to expression, ubiquitously expressed with higher expression in heart and skeletal muscle.

In terms of biological role, acts as a MYO6/Myosin VI adapter protein that targets myosin VI to endocytic structures. May also play a role in recruiting clathrin to endosomes. May regulate growth factor-induced mitogenic signaling. The sequence is that of TOM1-like protein 2 (TOM1L2) from Homo sapiens (Human).